Here is a 217-residue protein sequence, read N- to C-terminus: Thiamine-phosphate synthase (217 aa).

4-amino-2-methyl-5-(diphosphooxymethyl)pyrimidine contacts are provided by residues 39-43 (QLRRK) and asparagine 71. Residues aspartate 72 and aspartate 91 each coordinate Mg(2+). Position 110 (serine 110) interacts with 4-amino-2-methyl-5-(diphosphooxymethyl)pyrimidine. Position 137-139 (137-139 (SPT)) interacts with 2-[(2R,5Z)-2-carboxy-4-methylthiazol-5(2H)-ylidene]ethyl phosphate. Lysine 140 is a binding site for 4-amino-2-methyl-5-(diphosphooxymethyl)pyrimidine. Residues glycine 173 and 193–194 (IS) contribute to the 2-[(2R,5Z)-2-carboxy-4-methylthiazol-5(2H)-ylidene]ethyl phosphate site.

It belongs to the thiamine-phosphate synthase family. Mg(2+) is required as a cofactor.

The catalysed reaction is 2-[(2R,5Z)-2-carboxy-4-methylthiazol-5(2H)-ylidene]ethyl phosphate + 4-amino-2-methyl-5-(diphosphooxymethyl)pyrimidine + 2 H(+) = thiamine phosphate + CO2 + diphosphate. It carries out the reaction 2-(2-carboxy-4-methylthiazol-5-yl)ethyl phosphate + 4-amino-2-methyl-5-(diphosphooxymethyl)pyrimidine + 2 H(+) = thiamine phosphate + CO2 + diphosphate. It catalyses the reaction 4-methyl-5-(2-phosphooxyethyl)-thiazole + 4-amino-2-methyl-5-(diphosphooxymethyl)pyrimidine + H(+) = thiamine phosphate + diphosphate. It functions in the pathway cofactor biosynthesis; thiamine diphosphate biosynthesis; thiamine phosphate from 4-amino-2-methyl-5-diphosphomethylpyrimidine and 4-methyl-5-(2-phosphoethyl)-thiazole: step 1/1. Functionally, condenses 4-methyl-5-(beta-hydroxyethyl)thiazole monophosphate (THZ-P) and 2-methyl-4-amino-5-hydroxymethyl pyrimidine pyrophosphate (HMP-PP) to form thiamine monophosphate (TMP). This chain is Thiamine-phosphate synthase, found in Bordetella parapertussis (strain 12822 / ATCC BAA-587 / NCTC 13253).